Here is a 625-residue protein sequence, read N- to C-terminus: TORTIFOLIA1-like protein 4 (625 aa).

The tract at residues 1 to 34 (MSVHGRFPASPPISLSPSSSSTSPSSQSPSTPPD) is disordered. Positions 12–29 (PISLSPSSSSTSPSSQSP) are enriched in low complexity. HEAT repeat units follow at residues 69–106 (DSFSPFLNCIHNTDSSVKSPVRKQCVALLSVLSRYHGD), 110–147 (PHLAKMVSTVIRRLRDPDSSVRSACAVATADMSAHVTR), 149–186 (PFASVAKPLIETLIQEGDSNLQIGAALCLAASVDAATD), 190–227 (EQLRKSLPKIGKLLKSDGFKAKAALLSAVGSIITAGGA), and 230–268 (KPVLDWLVPVLIEFLSSEDWAARKSAAEALGKVATAEDL). The segment at 391 to 466 (SVDNKGPHFT…VKNCKDDVEE (76 aa)) is disordered. 3 stretches are compositionally biased toward basic and acidic residues: residues 404 to 413 (KSSEETEEKA), 420 to 434 (IIKHTISEKSREDSK), and 455 to 466 (DSVKNCKDDVEE). Position 475 is a phosphoserine (Ser-475). The tract at residues 582 to 625 (GMRESTDTNNGQRGGSVFQKRSRRDQFQDCMHTTLQKPTTRLST) is disordered. Residues 612–625 (MHTTLQKPTTRLST) are compositionally biased toward polar residues.

This Arabidopsis thaliana (Mouse-ear cress) protein is TORTIFOLIA1-like protein 4.